The primary structure comprises 860 residues: Ubiquitin carboxyl-terminal hydrolase 13 (860 aa).

The UBP-type; degenerate zinc finger occupies glutamine 168–methionine 276. Positions 192, 195, 212, and 225 each coordinate Zn(2+). The region spanning threonine 318–leucine 857 is the USP domain. The Nucleophile role is filled by cysteine 327. The segment at aspartate 611–isoleucine 636 is disordered. 2 consecutive UBA domains span residues glutamate 635–histidine 676 and glutamine 710–histidine 750. Residues aspartate 755–proline 768 are compositionally biased toward acidic residues. Residues aspartate 755–valine 795 form a disordered region. The span at asparagine 769 to threonine 780 shows a compositional bias: polar residues. Positions aspartate 781–proline 793 are enriched in low complexity. Histidine 819 serves as the catalytic Proton acceptor.

Belongs to the peptidase C19 family.

The enzyme catalyses Thiol-dependent hydrolysis of ester, thioester, amide, peptide and isopeptide bonds formed by the C-terminal Gly of ubiquitin (a 76-residue protein attached to proteins as an intracellular targeting signal).. With respect to regulation, specifically inhibited by spautin-1 (specific and potent autophagy inhibitor-1), a derivative of MBCQ that binds to usp13 and inhibits deubiquitinase activity. Deubiquitinase that mediates deubiquitination of target proteins and is involved in various processes such as autophagy and endoplasmic reticulum-associated degradation (ERAD). The polypeptide is Ubiquitin carboxyl-terminal hydrolase 13 (usp13) (Danio rerio (Zebrafish)).